A 243-amino-acid polypeptide reads, in one-letter code: uncharacterized protein (243 aa).

The [4Fe-4S] cluster site is built by C120 and C157.

As to quaternary structure, homodimer. [4Fe-4S] cluster is required as a cofactor.

This is an uncharacterized protein from Methanocaldococcus jannaschii (strain ATCC 43067 / DSM 2661 / JAL-1 / JCM 10045 / NBRC 100440) (Methanococcus jannaschii).